We begin with the raw amino-acid sequence, 366 residues long: 4-hydroxy-3-methylbut-2-en-1-yl diphosphate synthase (flavodoxin) (366 aa).

[4Fe-4S] cluster contacts are provided by Cys-270, Cys-273, Cys-305, and Glu-312.

The protein belongs to the IspG family. It depends on [4Fe-4S] cluster as a cofactor.

It carries out the reaction (2E)-4-hydroxy-3-methylbut-2-enyl diphosphate + oxidized [flavodoxin] + H2O + 2 H(+) = 2-C-methyl-D-erythritol 2,4-cyclic diphosphate + reduced [flavodoxin]. It functions in the pathway isoprenoid biosynthesis; isopentenyl diphosphate biosynthesis via DXP pathway; isopentenyl diphosphate from 1-deoxy-D-xylulose 5-phosphate: step 5/6. Converts 2C-methyl-D-erythritol 2,4-cyclodiphosphate (ME-2,4cPP) into 1-hydroxy-2-methyl-2-(E)-butenyl 4-diphosphate. In Acidithiobacillus ferrooxidans (strain ATCC 53993 / BNL-5-31) (Leptospirillum ferrooxidans (ATCC 53993)), this protein is 4-hydroxy-3-methylbut-2-en-1-yl diphosphate synthase (flavodoxin).